Here is a 559-residue protein sequence, read N- to C-terminus: Glucans biosynthesis protein G (559 aa).

The first 37 residues, 1–37 (MVSLLSCGTSASSHIVKKALTRLSLAMAAGLCFNLAA), serve as a signal peptide directing secretion.

The protein belongs to the OpgD/OpgG family.

The protein resides in the periplasm. It functions in the pathway glycan metabolism; osmoregulated periplasmic glucan (OPG) biosynthesis. In terms of biological role, involved in the biosynthesis of osmoregulated periplasmic glucans (OPGs). The polypeptide is Glucans biosynthesis protein G (Shewanella frigidimarina (strain NCIMB 400)).